A 599-amino-acid chain; its full sequence is Elongation factor 4 (599 aa).

Residues 4–186 (ENIRNFSIIA…EIVTKIPPPQ (183 aa)) enclose the tr-type G domain. Residues 16–21 (DHGKST) and 133–136 (NKID) each bind GTP.

The protein belongs to the TRAFAC class translation factor GTPase superfamily. Classic translation factor GTPase family. LepA subfamily.

The protein localises to the cell inner membrane. The catalysed reaction is GTP + H2O = GDP + phosphate + H(+). Its function is as follows. Required for accurate and efficient protein synthesis under certain stress conditions. May act as a fidelity factor of the translation reaction, by catalyzing a one-codon backward translocation of tRNAs on improperly translocated ribosomes. Back-translocation proceeds from a post-translocation (POST) complex to a pre-translocation (PRE) complex, thus giving elongation factor G a second chance to translocate the tRNAs correctly. Binds to ribosomes in a GTP-dependent manner. The chain is Elongation factor 4 from Geotalea uraniireducens (strain Rf4) (Geobacter uraniireducens).